Here is a 118-residue protein sequence, read N- to C-terminus: NADH-quinone oxidoreductase subunit A 2 (118 aa).

3 helical membrane-spanning segments follow: residues 5 to 25 (YLPI…SVIF), 62 to 82 (LIAM…PWAV), and 87 to 107 (LGMF…VGYV).

It belongs to the complex I subunit 3 family. NDH-1 is composed of 14 different subunits. Subunits NuoA, H, J, K, L, M, N constitute the membrane sector of the complex.

The protein resides in the cell inner membrane. It catalyses the reaction a quinone + NADH + 5 H(+)(in) = a quinol + NAD(+) + 4 H(+)(out). NDH-1 shuttles electrons from NADH, via FMN and iron-sulfur (Fe-S) centers, to quinones in the respiratory chain. The immediate electron acceptor for the enzyme in this species is believed to be ubiquinone. Couples the redox reaction to proton translocation (for every two electrons transferred, four hydrogen ions are translocated across the cytoplasmic membrane), and thus conserves the redox energy in a proton gradient. The chain is NADH-quinone oxidoreductase subunit A 2 from Citrifermentans bemidjiense (strain ATCC BAA-1014 / DSM 16622 / JCM 12645 / Bem) (Geobacter bemidjiensis).